The sequence spans 128 residues: Conopressin-conophysin (128 aa).

An N-terminal signal peptide occupies residues Met-1 to Ala-27. A disulfide bridge links Cys-28 with Cys-33. Residue Gly-36 is modified to Glycine amide. Positions Gly-37–Arg-44 are excised as a propeptide. 7 disulfide bridges follow: Cys-50-Cys-90, Cys-53-Cys-64, Cys-58-Cys-80, Cys-65-Cys-70, Cys-97-Cys-115, Cys-109-Cys-127, and Cys-116-Cys-121.

The protein belongs to the vasopressin/oxytocin family. As to expression, expressed by the venom gland.

It localises to the secreted. Targets vasopressin-oxytocin related receptors. Is more active on fish receptors than on their human counterparts, supporting an evolved role of this conopressin in the envenomation process. Acts as an agonist on zebrafish vasopressin receptors V1a1R (EC(50)=10.6 nM), V1a2R (EC(50)=44.06 nM, partial agonist), V2R (EC(50)=299.2 nM) and oxytocin receptor (EC(50)=353.73 nM, partial agonist). Shows a weaker activity on human receptors AVPR1B (EC(50)=51.92 nM), AVPR1A (EC(50)=123.78 nM), AVPR2 (EC(50)=299.2 nM) and oxytocin (OXTR) receptor (EC(50)=455.66 nM, partial agonist). In vivo, exhibits grooming and scratching behavior in mice, following intracerebral injection. The polypeptide is Conopressin-conophysin (Conus geographus (Geography cone)).